A 65-amino-acid polypeptide reads, in one-letter code: Small ribosomal subunit protein eS27 (65 aa).

The Zn(2+) site is built by Cys20, Cys23, Cys39, and Cys42. The C4-type zinc finger occupies 20 to 42; the sequence is CIDCGNEQIVFSNPATTVRCLVC.

The protein belongs to the eukaryotic ribosomal protein eS27 family. As to quaternary structure, part of the 30S ribosomal subunit. Zn(2+) is required as a cofactor.

This Thermococcus onnurineus (strain NA1) protein is Small ribosomal subunit protein eS27.